Here is a 225-residue protein sequence, read N- to C-terminus: Ribosomal RNA large subunit methyltransferase E (225 aa).

Residues G76, W78, D99, D115, and D139 each contribute to the S-adenosyl-L-methionine site. Catalysis depends on K179, which acts as the Proton acceptor.

It belongs to the class I-like SAM-binding methyltransferase superfamily. RNA methyltransferase RlmE family.

Its subcellular location is the cytoplasm. It catalyses the reaction uridine(2552) in 23S rRNA + S-adenosyl-L-methionine = 2'-O-methyluridine(2552) in 23S rRNA + S-adenosyl-L-homocysteine + H(+). Functionally, specifically methylates the uridine in position 2552 of 23S rRNA at the 2'-O position of the ribose in the fully assembled 50S ribosomal subunit. This is Ribosomal RNA large subunit methyltransferase E from Afipia carboxidovorans (strain ATCC 49405 / DSM 1227 / KCTC 32145 / OM5) (Oligotropha carboxidovorans).